A 90-amino-acid polypeptide reads, in one-letter code: Kunitz-type serine protease inhibitor C5 (90 aa).

The first 24 residues, methionine 1 to glycine 24, serve as a signal peptide directing secretion. Positions cysteine 31–cysteine 81 constitute a BPTI/Kunitz inhibitor domain. Intrachain disulfides connect cysteine 31/cysteine 81, cysteine 40/cysteine 64, and cysteine 56/cysteine 77. Residues arginine 85–threonine 90 constitute a propeptide that is removed on maturation.

This sequence belongs to the venom Kunitz-type family. Expressed by the venom gland.

It localises to the secreted. In terms of biological role, serine protease inhibitor that inhibits trypsin. In Daboia siamensis (Eastern Russel's viper), this protein is Kunitz-type serine protease inhibitor C5.